Consider the following 820-residue polypeptide: Serine/threonine-protein phosphatase 4 regulatory subunit 3B (820 aa).

The 100-residue stretch at 1–100 (MSDTRRRVKV…DEIWEKICQV (100 aa)) folds into the WH1 domain. Residues Ser-117 and Ser-663 each carry the phosphoserine modification. Positions 687-820 (EDDDEEGKAV…SPRKRPRLGS (134 aa)) are disordered. Residues 701-732 (EKSKTEDDFPDSYEKFMETKKAKESEDKENLP) show a composition bias toward basic and acidic residues. The span at 744-789 (FSHSPSATNGTNSTNSKSVVSQTTPASSNVASSKTTSLATSVTATK) shows a compositional bias: polar residues. Positions 798–809 (YPDDEEEDEEEE) are enriched in acidic residues. Ser-811 is modified (phosphoserine).

This sequence belongs to the SMEK family. In terms of assembly, serine/threonine-protein phosphatase 4 (PP4) occurs in different assemblies of the catalytic and one or more regulatory subunits. Component of the PP4 complex PPP4C-PPP4R2-PPP4R3B.

It is found in the cytoplasm. It localises to the cytoskeleton. The protein resides in the microtubule organizing center. Its subcellular location is the centrosome. The protein localises to the nucleus. In terms of biological role, regulatory subunit of serine/threonine-protein phosphatase 4 (PP4). May regulate the activity of PPP4C at centrosomal microtubule organizing centers. This is Serine/threonine-protein phosphatase 4 regulatory subunit 3B from Mus musculus (Mouse).